The chain runs to 485 residues: Probable high-affinity nitrate transporter 2.4 (485 aa).

12 helical membrane-spanning segments follow: residues 56-76 (WMSL…LPAM), 80-100 (LVLA…ATLV), 119-139 (GVAS…ASSP), 147-167 (FVAG…SRIF), 177-197 (AVAA…MPVA), 215-235 (VTYL…LAFP), 270-290 (AWLL…MENV), 305-327 (AAGA…GGVA), 341-361 (LWAL…VGRM), 377-397 (VACA…VPFV), 405-425 (VSGM…RLFF), and 435-455 (AISC…LIHF).

The protein belongs to the major facilitator superfamily. Nitrate/nitrite porter (TC 2.A.1.8) family. As to expression, expressed in the base of the lateral root primordia, root-shoot junction zone, leaves, ends of the husk and vascular tissue of the anthers.

Its subcellular location is the cell membrane. Its function is as follows. Involved in nitrate transport. In Oryza sativa subsp. japonica (Rice), this protein is Probable high-affinity nitrate transporter 2.4 (NRT2.4).